A 182-amino-acid polypeptide reads, in one-letter code: Bifunctional protein PyrR (182 aa).

Positions valine 100–threonine 112 match the PRPP-binding motif.

This sequence belongs to the purine/pyrimidine phosphoribosyltransferase family. PyrR subfamily. Homodimer and homohexamer; in equilibrium.

It catalyses the reaction UMP + diphosphate = 5-phospho-alpha-D-ribose 1-diphosphate + uracil. In terms of biological role, regulates transcriptional attenuation of the pyrimidine nucleotide (pyr) operon by binding in a uridine-dependent manner to specific sites on pyr mRNA. This disrupts an antiterminator hairpin in the RNA and favors formation of a downstream transcription terminator, leading to a reduced expression of downstream genes. Its function is as follows. Also displays a weak uracil phosphoribosyltransferase activity which is not physiologically significant. This chain is Bifunctional protein PyrR, found in Natranaerobius thermophilus (strain ATCC BAA-1301 / DSM 18059 / JW/NM-WN-LF).